The primary structure comprises 82 residues: Small ribosomal subunit protein bS16 (82 aa).

This sequence belongs to the bacterial ribosomal protein bS16 family.

This chain is Small ribosomal subunit protein bS16, found in Mannheimia succiniciproducens (strain KCTC 0769BP / MBEL55E).